Consider the following 309-residue polypeptide: 2-oxoacid:ferredoxin oxidoreductase 2, subunit beta (309 aa).

C17, C20, and C51 together coordinate [4Fe-4S] cluster. Thiamine diphosphate is bound by residues 49–52 and H68; that span reads IGCS. D93 provides a ligand contact to Mg(2+). Residue 94 to 95 coordinates thiamine diphosphate; that stretch reads GD. Mg(2+)-binding residues include N121 and V123. 125-126 contacts thiamine diphosphate; it reads GL. [4Fe-4S] cluster is bound at residue C200.

In terms of assembly, heterodimer composed of an alpha and a beta subunit. [4Fe-4S] cluster serves as cofactor. The cofactor is thiamine diphosphate. Requires Mg(2+) as cofactor.

It carries out the reaction a 2-oxocarboxylate + 2 oxidized [2Fe-2S]-[ferredoxin] + CoA = an acyl-CoA + 2 reduced [2Fe-2S]-[ferredoxin] + CO2 + H(+). Functionally, catalyzes the coenzyme A-dependent oxidative decarboxylation of different 2-oxoacids such as pyruvate, 2-oxobutyrate, glyoxylate and 2-oxoglutarate to form their CoA derivatives. This chain is 2-oxoacid:ferredoxin oxidoreductase 2, subunit beta, found in Aeropyrum pernix (strain ATCC 700893 / DSM 11879 / JCM 9820 / NBRC 100138 / K1).